Consider the following 79-residue polypeptide: MKLSCLLLTLAIIFVLTIVHAPNVEAKALANPESDAIGFADAVGEADPNIKWSKYAKKVGKVIVKHGIPLAASIALSQG.

Positions 1-21 (MKLSCLLLTLAIIFVLTIVHA) are cleaved as a signal peptide. Positions 22-48 (PNVEAKALANPESDAIGFADAVGEADP) are excised as a propeptide. Position 78 is a glutamine amide (Q78).

As to expression, expressed by the venom gland.

The protein resides in the secreted. May have antimicrobial properties, like most ant linear peptides. The sequence is that of U-myrmeciitoxin(01)-Mg9a from Myrmecia gulosa (Red bulldog ant).